Reading from the N-terminus, the 3119-residue chain is Huntingtin (3119 aa).

The interval 1–65 is disordered; it reads MATLEKLMKA…LPGPAEEPLH (65 aa). Lys-9 carries the N6-acetyllysine modification. The segment covering 24-60 has biased composition (pro residues); that stretch reads QPPPQAPPPPPPPPPQPPQPPPQGQPPPPPPPLPGPA. Residues Lys-155 and Lys-213 each carry the N6-acetyllysine modification. HEAT repeat units follow at residues 183–220 and 225–262; these read PYLVNLLPCLTRTSKRPEESVQETLAAAVPKIMASFGN and NEIKVLLKAFIANLKSSSPTVRRTAAGSAVSICQHSRR. The residue at position 322 (Lys-322) is an N6-acetyllysine. Phosphoserine is present on residues Ser-396, Ser-398, and Ser-411. At Lys-421 the chain carries N6-acetyllysine. The tract at residues 470-481 is interaction with ZDHHC17; that stretch reads GHDIITEQPRSQ. The tract at residues 495 to 558 is disordered; the sequence is DLTSAATDGD…DSAVTPSDSS (64 aa). A compositionally biased stretch (polar residues) spans 529-558; the sequence is DGTQASSPISDSSQTTTEGPDSAVTPSDSS. Residue Gly-530 is the site of N-myristoyl glycine attachment. Ser-620 and Ser-623 each carry phosphoserine. HEAT repeat units follow at residues 782 to 819 and 882 to 920; these read FSLVDCIPLLQKTLKDESSVTCKLACTAVRHCVLSLCS and KLQERVLNNVVIYLLGDEDPRVRHVAATSLTRLVPKLFY. The disordered stretch occupies residues 1146-1204; that stretch reads KAALPSLTNPPSLSPIRRKGKEKEPGEQASTPMSPKKVGEASAASRQSDTSGPVTASKS. A compositionally biased stretch (low complexity) spans 1149-1160; the sequence is LPSLTNPPSLSP. Phosphoserine; by CDK5 occurs at positions 1159 and 1179. Polar residues predominate over residues 1189–1204; sequence ASRQSDTSGPVTASKS. An HEAT 5 repeat occupies 1404 to 1441; that stretch reads LFEPLVIKALKQYTTTTSVQLQKQVLDLLAQLVQLRVN. Ser-1853 carries the post-translational modification Phosphoserine. Residues 2372-2381 carry the Nuclear export signal motif; it reads IVISLARLPL. The disordered stretch occupies residues 2610–2637; that stretch reads EEEWDEEEEEESDVPAPTSPPVSPVNSR. Over residues 2611–2622 the composition is skewed to acidic residues; the sequence is EEWDEEEEEESD.

Belongs to the huntingtin family. As to quaternary structure, interacts with PFN1. Interacts through its N-terminus with PRPF40A. Interacts with PQBP1. Interacts with SETD2. Interacts with SH3GLB1. Interacts with SYVN. Interacts with TPR; the interaction is inhibited by forms of Huntingtin with expanded polyglutamine stretch. Interacts with ZDHHC13 (via ANK repeats). Interacts with ZDHHC17 (via ANK repeats). Interacts with F8A1/F8A2/F8A3. Found in a complex with F8A1/F8A2/F8A3, HTT and RAB5A; mediates the recruitment of HTT by RAB5A. Phosphorylation at Ser-1159 and Ser-1179 by CDK5 in response to DNA damage in nuclei of neurons protects neurons against polyglutamine expansion as well as DNA damage mediated toxicity. Post-translationally, cleaved by caspases downstream of the polyglutamine stretch. In terms of processing, myristoylated at Gly-530, following proteolytic cleavage at Asp-529. The highest level is seen throughout the brain, but it is also found in the stomach, heart, testis, adipose tissue, muscle, spleen, liver, and kidney.

Its subcellular location is the cytoplasm. The protein resides in the nucleus. It is found in the cytoplasmic vesicle. It localises to the autophagosome. May play a role in microtubule-mediated transport or vesicle function. In terms of biological role, promotes the formation of autophagic vesicles. This is Huntingtin (Htt) from Mus musculus (Mouse).